A 524-amino-acid polypeptide reads, in one-letter code: Sensitive to high expression protein 9 homolog, mitochondrial (524 aa).

The stretch at E92–E133 forms a coiled coil. Basic and acidic residues-rich tracts occupy residues I94–E161 and E168–V183. The segment at I94–E190 is disordered. 2 coiled-coil regions span residues Y270–A304 and R338–S371. A helical membrane pass occupies residues W392–V412. Residues E413 to E502 are Mitochondrial intermembrane-facing. A helical transmembrane segment spans residues L503–F523. Residue K524 is a topological domain, mitochondrial matrix.

This sequence belongs to the SHE9 family. In terms of assembly, homooligomer.

It localises to the mitochondrion inner membrane. Functionally, required for the maintenance of the structure of the mitochondrial inner membrane. Involved in mitochondrial morphology. Causes growth arrest when highly overexpressed. This chain is Sensitive to high expression protein 9 homolog, mitochondrial (SHE9), found in Candida albicans (strain SC5314 / ATCC MYA-2876) (Yeast).